A 529-amino-acid chain; its full sequence is Peptide chain release factor 3 (529 aa).

The tr-type G domain maps to 11–280; the sequence is AKRRTFAIIS…GLVAWAPAPM (270 aa). GTP-binding positions include 20–27, 88–92, and 142–145; these read SHPDAGKT, DTPGH, and NKLD.

Belongs to the TRAFAC class translation factor GTPase superfamily. Classic translation factor GTPase family. PrfC subfamily.

It localises to the cytoplasm. Increases the formation of ribosomal termination complexes and stimulates activities of RF-1 and RF-2. It binds guanine nucleotides and has strong preference for UGA stop codons. It may interact directly with the ribosome. The stimulation of RF-1 and RF-2 is significantly reduced by GTP and GDP, but not by GMP. This is Peptide chain release factor 3 from Salmonella agona (strain SL483).